We begin with the raw amino-acid sequence, 404 residues long: CCA-adding enzyme (404 aa).

Residues glycine 27 and arginine 30 each contribute to the ATP site. CTP is bound by residues glycine 27 and arginine 30. Positions 40 and 42 each coordinate Mg(2+). The ATP site is built by arginine 111, aspartate 154, arginine 157, arginine 160, and arginine 163. The CTP site is built by arginine 111, aspartate 154, arginine 157, arginine 160, and arginine 163.

The protein belongs to the tRNA nucleotidyltransferase/poly(A) polymerase family. Bacterial CCA-adding enzyme type 3 subfamily. In terms of assembly, homodimer. It depends on Mg(2+) as a cofactor.

The enzyme catalyses a tRNA precursor + 2 CTP + ATP = a tRNA with a 3' CCA end + 3 diphosphate. The catalysed reaction is a tRNA with a 3' CCA end + 2 CTP + ATP = a tRNA with a 3' CCACCA end + 3 diphosphate. Functionally, catalyzes the addition and repair of the essential 3'-terminal CCA sequence in tRNAs without using a nucleic acid template. Adds these three nucleotides in the order of C, C, and A to the tRNA nucleotide-73, using CTP and ATP as substrates and producing inorganic pyrophosphate. tRNA 3'-terminal CCA addition is required both for tRNA processing and repair. Also involved in tRNA surveillance by mediating tandem CCA addition to generate a CCACCA at the 3' terminus of unstable tRNAs. While stable tRNAs receive only 3'-terminal CCA, unstable tRNAs are marked with CCACCA and rapidly degraded. The structural flexibility of RNA controls the choice between CCA versus CCACCA addition: following the first CCA addition cycle, nucleotide-binding to the active site triggers a clockwise screw motion, producing torque on the RNA. This ejects stable RNAs, whereas unstable RNAs are refolded while bound to the enzyme and subjected to a second CCA catalytic cycle. The sequence is that of CCA-adding enzyme from Geobacillus stearothermophilus (Bacillus stearothermophilus).